Reading from the N-terminus, the 139-residue chain is Translation initiation factor 2 subunit beta (139 aa).

Belongs to the eIF-2-beta/eIF-5 family. As to quaternary structure, heterotrimer composed of an alpha, a beta and a gamma chain.

Its function is as follows. eIF-2 functions in the early steps of protein synthesis by forming a ternary complex with GTP and initiator tRNA. This chain is Translation initiation factor 2 subunit beta, found in Nanoarchaeum equitans (strain Kin4-M).